Reading from the N-terminus, the 229-residue chain is Adenylate kinase 1 (229 aa).

42 to 47 (GCGKGT) provides a ligand contact to ATP. Ser62 is subject to Phosphoserine. Residues Ser63, Arg68, 118 to 121 (GYPR), and Gln125 contribute to the AMP site. Residue Arg156 participates in ATP binding. Residues Arg164 and Arg175 each contribute to the AMP site.

It belongs to the adenylate kinase family. AK1 subfamily. As to expression, high expression levels in the thorax, suggesting a possible function in the gastrointestinal or reproductive systems.

Its subcellular location is the cytoplasm. It carries out the reaction AMP + ATP = 2 ADP. Its function is as follows. Catalyzes the reversible transfer of the terminal phosphate group between ATP and AMP. Plays an important role in cellular energy homeostasis and in adenine nucleotide metabolism. In Drosophila melanogaster (Fruit fly), this protein is Adenylate kinase 1.